The primary structure comprises 962 residues: Glycine dehydrogenase (decarboxylating) (962 aa).

K709 carries the post-translational modification N6-(pyridoxal phosphate)lysine.

The protein belongs to the GcvP family. In terms of assembly, the glycine cleavage system is composed of four proteins: P, T, L and H. The cofactor is pyridoxal 5'-phosphate.

The enzyme catalyses N(6)-[(R)-lipoyl]-L-lysyl-[glycine-cleavage complex H protein] + glycine + H(+) = N(6)-[(R)-S(8)-aminomethyldihydrolipoyl]-L-lysyl-[glycine-cleavage complex H protein] + CO2. Its function is as follows. The glycine cleavage system catalyzes the degradation of glycine. The P protein binds the alpha-amino group of glycine through its pyridoxal phosphate cofactor; CO(2) is released and the remaining methylamine moiety is then transferred to the lipoamide cofactor of the H protein. In Shewanella loihica (strain ATCC BAA-1088 / PV-4), this protein is Glycine dehydrogenase (decarboxylating).